A 389-amino-acid polypeptide reads, in one-letter code: MKTFLTRIVKGVFGTAYKLLSALLPVQHDKVVIASYREDQLSDNFRGVYEKLKQDPSLRITLLFRKMDKGLIGRAAYLLHLFCSLYHLATCRVLLLDDYYFPLYVVPKRKETVAIQLWHACGAFKKFGYSIVNKPFGPSSDYLKIVPVHSNYDYAIVSAPAAVPHFAEAFQMEEKQILPLGIPRTDYFYHKEHIRTVLDEFHQAYPELKHKKKLLYAPTFRGSGHHQEGDATPLDLLQLKSALHHKDYVVMLHLHPYMRKHAHTEEDDFVLDLTDSYSLYDLMAISDGLITDYSSVIFEYSLLKRPMYFYCPDLEDYLKERDFYYPFESFVPGPISKDVPSLVHDIESDHEADTKRIEAFSQTYITHQDGKSSERVADFISSFLTSGAD.

Belongs to the CDP-glycerol glycerophosphotransferase family.

It localises to the cell membrane. It carries out the reaction 4-O-[(2R)-glycerylphospho]-N-acetyl-beta-D-mannosaminyl-(1-&gt;4)-N-acetyl-alpha-D-glucosaminyl di-trans,octa-cis-undecaprenyl diphosphate + CDP-L-ribitol = 4-O-[1-D-ribitylphospho-(2R)-1-glycerylphospho]-N-acetyl-beta-D-mannosaminyl-(1-&gt;4)-N-acetyl-alpha-D-glucosaminyl di-trans,octa-cis-undecaprenyl diphosphate + CMP + H(+). It functions in the pathway cell wall biogenesis; poly(ribitol phosphate) teichoic acid biosynthesis. Functionally, catalyzes the addition of a single ribitol phosphate unit onto the glycerol phosphate of the linkage unit, as a primer for polymerisation by TarL. The sequence is that of Teichoic acid ribitol-phosphate primase (tarK) from Bacillus spizizenii (strain ATCC 23059 / NRRL B-14472 / W23) (Bacillus subtilis subsp. spizizenii).